The sequence spans 236 residues: MTRRYWNINLKEMVEAGVHFGHGIKKWNPKMAPYISAKRKGTHIINLARTARFLSEACDLVFDAASQGKSFLIVGTKKRATDLVASAAIRARCHYVNKKWFSGMLTNWSITKTRLSQFRDLRAEEKMGKFQHLPKRDVAILKRKLSTLQRYLGGIKYMTRLPDIVIVLDQQKEYIALRECAILGIPTISLVDTNCDPDLANISIPANDDTMTSIRLILNKLVFAICEGHSLYIRNH.

It belongs to the universal ribosomal protein uS2 family.

Its subcellular location is the plastid. It localises to the chloroplast. This chain is Small ribosomal subunit protein uS2c (rps2), found in Lolium perenne (Perennial ryegrass).